The sequence spans 210 residues: Large ribosomal subunit protein uL3 (210 aa).

Positions 120–143 (FQGNIKKDGQSRGPMGHGSRYHRR) are disordered.

It belongs to the universal ribosomal protein uL3 family. As to quaternary structure, part of the 50S ribosomal subunit. Forms a cluster with proteins L14 and L19.

Its function is as follows. One of the primary rRNA binding proteins, it binds directly near the 3'-end of the 23S rRNA, where it nucleates assembly of the 50S subunit. The chain is Large ribosomal subunit protein uL3 from Latilactobacillus sakei subsp. sakei (strain 23K) (Lactobacillus sakei subsp. sakei).